The sequence spans 75 residues: Pi-hexatoxin-Hi1b (75 aa).

6 disulfides stabilise this stretch: C3/C18, C10/C23, C17/C33, C40/C55, C47/C60, and C54/C71. 2 Domain repeats span residues 3–33 (CIRK…FEVC) and 40–71 (CLVK…SSVC). The 2 X approximate repeats with cysteine pattern C-C-CC-C-C stretch occupies residues 3–71 (CIRKWLSCVD…KRSGNKSSVC (69 aa)).

Belongs to the psalmotoxin-1 family. Double-knot toxin subfamily. As to expression, expressed by the venom gland.

It localises to the secreted. In terms of biological role, this toxin potently and selectively inhibits ASIC1a, an isoform of the gene ASIC1. It incompletely inhibits ASIC1a activation in a pH-independent and slowly reversible manner. This toxin acts by binding to and stabilizing the closed state of the channel, thereby impeding the transition into a conducting state. This toxin may bind to the acidic pocket of ASIC1a, since mutation of a key residue of this pocket (Arg-350) abolishes the ability of the toxin to inhibit ASIC1a. In vivo, this toxin protects the brain from neuronal injury when administered up to 8 hours after stroke onset. This Hadronyche infensa (Fraser island funnel-web spider) protein is Pi-hexatoxin-Hi1b.